The following is a 419-amino-acid chain: Ribosome biogenesis protein NOP53 (419 aa).

Disordered stretches follow at residues 1–21 and 233–283; these read MGIKERNAPSQYKQSSRKNKR and KAFE…KIRQ. Positions 233-261 are enriched in basic and acidic residues; the sequence is KAFEDKGLVSDQDVNHSIDSDDQSEHEQA. Phosphoserine occurs at positions 242, 249, 252, and 256. A compositionally biased stretch (basic residues) spans 269–283; it reads KNKRKTRSQRNKIRQ.

This sequence belongs to the NOP53 family.

It localises to the nucleus. The protein localises to the nucleolus. It is found in the nucleoplasm. Its function is as follows. May play a role in ribosome biogenesis. The protein is Ribosome biogenesis protein NOP53 of Schizosaccharomyces pombe (strain 972 / ATCC 24843) (Fission yeast).